Reading from the N-terminus, the 33-residue chain is Photosystem II reaction center protein Psb30 (33 aa).

Residues 5–25 (VVVQLGSLSLIVLAGPIIVLL) traverse the membrane as a helical segment.

The protein belongs to the Psb30/Ycf12 family. As to quaternary structure, PSII is composed of 1 copy each of membrane proteins PsbA, PsbB, PsbC, PsbD, PsbE, PsbF, PsbH, PsbI, PsbJ, PsbK, PsbL, PsbM, PsbT, PsbX, PsbY, PsbZ, Psb30/Ycf12, peripheral proteins of the oxygen-evolving complex and a large number of cofactors. It forms dimeric complexes.

The protein localises to the plastid. Its subcellular location is the chloroplast thylakoid membrane. A core subunit of photosystem II (PSII), probably helps stabilize the reaction center. The chain is Photosystem II reaction center protein Psb30 from Mesostigma viride (Green alga).